A 240-amino-acid chain; its full sequence is Uridylate kinase (240 aa).

12–15 (KLSG) is a binding site for ATP. Gly-54 serves as a coordination point for UMP. 2 residues coordinate ATP: Gly-55 and Arg-59. Residues Asp-74 and 135 to 142 (TGNPFFTT) contribute to the UMP site. Residues Thr-162, Tyr-168, and Asp-171 each coordinate ATP.

This sequence belongs to the UMP kinase family. As to quaternary structure, homohexamer.

It localises to the cytoplasm. It carries out the reaction UMP + ATP = UDP + ADP. Its pathway is pyrimidine metabolism; CTP biosynthesis via de novo pathway; UDP from UMP (UMPK route): step 1/1. With respect to regulation, inhibited by UTP. In terms of biological role, catalyzes the reversible phosphorylation of UMP to UDP. The chain is Uridylate kinase from Xanthomonas euvesicatoria pv. vesicatoria (strain 85-10) (Xanthomonas campestris pv. vesicatoria).